Reading from the N-terminus, the 179-residue chain is Large ribosomal subunit protein uL5 (179 aa).

Belongs to the universal ribosomal protein uL5 family. In terms of assembly, part of the 50S ribosomal subunit; part of the 5S rRNA/L5/L18/L25 subcomplex. Contacts the 5S rRNA and the P site tRNA. Forms a bridge to the 30S subunit in the 70S ribosome.

This is one of the proteins that bind and probably mediate the attachment of the 5S RNA into the large ribosomal subunit, where it forms part of the central protuberance. In the 70S ribosome it contacts protein S13 of the 30S subunit (bridge B1b), connecting the 2 subunits; this bridge is implicated in subunit movement. Contacts the P site tRNA; the 5S rRNA and some of its associated proteins might help stabilize positioning of ribosome-bound tRNAs. The polypeptide is Large ribosomal subunit protein uL5 (Idiomarina loihiensis (strain ATCC BAA-735 / DSM 15497 / L2-TR)).